The chain runs to 1196 residues: NACHT, LRR and PYD domains-containing protein 1b allele 5 (1196 aa).

The disordered stretch occupies residues 1-22 (MEESPPKQKSNTKVTQHEGQQD). An NACHT domain is found at 126–435 (QLVIIEGAAG…EFFAAISCIL (310 aa)). 132–139 (GAAGIGKS) lines the ATP pocket. LRR repeat units follow at residues 627-647 (NLEG…QSLC) and 684-704 (SLTE…RMLC). The tract at residues 789 to 922 (FWGPTGPVAT…GYTVLKNPSF (134 aa)) is ZU5. Residues 789-1072 (FWGPTGPVAT…KFDHLCDQEF (284 aa)) form the FIIND domain. The UPA stretch occupies residues 923–1072 (SPMGVVLRII…KFDHLCDQEF (150 aa)). The 84-residue stretch at 1106-1189 (HFMDQHREQL…HLVMDLFEKS (84 aa)) folds into the CARD domain.

Belongs to the NLRP family. In terms of assembly, interacts with DPP9; leading to inhibit activation of the inflammasome. DPP9 acts via formation of a ternary complex, composed of a DPP9 homodimer, one full-length Nlrp1b protein, and one cleaved C-terminus of Nlrp1b (NACHT, LRR and PYD domains-containing protein 1b, C-terminus). Interacts with DPP8; leading to inhibit activation of the inflammasome, probably via formation of a ternary complex with DPP8. Interacts (via LRR repeats) with BCL2 and BCL2L1 (via the loop between motifs BH4 and BH3). Interacts with NOD2; this interaction may increase IL1B release. Interacts with EIF2AK2/PKR; this interaction requires EIF2AK2 activity, is accompanied by EIF2AK2 autophosphorylation and promotes inflammasome assembly in response to B.anthracis lethal toxin. Interacts with MEFV; this interaction targets Nlrp1b to degradation by autophagy, hence preventing excessive IL1B- and IL18-mediated inflammation. Interacts with the C-terminal part of Nlrp1b (NACHT, LRR and PYD domains-containing protein 1b, C-terminus) in absence of pathogens and other damage-associated signals. As to quaternary structure, interacts with the N-terminal part of Nlrp1b (NACHT, LRR and PYD domains-containing protein 1b, N-terminus) in absence of pathogens and other damage-associated signals. Homomultimer; forms the Nlrp1b inflammasome polymeric complex, a filament composed of homopolymers of this form in response to pathogens and other damage-associated signals. The Nlrp1b inflammasome polymeric complex directly recruits pro-caspase-1 (proCASP1) independently of PYCARD/ASC. Interacts (via CARD domain) with CASP1 (via CARD domain); leading to CASP1 activation. Post-translationally, autocatalytically cleaved. Autocatalytic cleavage in FIIND region occurs constitutively, prior to activation signals, and is required for inflammasome activity (IL1B release), possibly by facilitating CASP1 binding. Both N- and C-terminal parts remain associated non-covalently. In terms of processing, ubiquitinated by the N-end rule pathway in response to pathogens and other damage-associated signals, leading to its degradation by the proteasome and subsequent release of the cleaved C-terminal part of the protein (NACHT, LRR and PYD domains-containing protein 1b, C-terminus), which polymerizes and forms the Nlrp1b inflammasome. (Microbial infection) Cleavage by B.anthracis lethal toxin (LT) endopeptidase promotes ubiquitination and degradation of the N-terminal part, releasing the cleaved C-terminal part of the protein (NACHT, LRR and PYD domains-containing protein 1b, C-terminus), which polymerizes and forms the Nlrp1b inflammasome. As to expression, expressed in macrophages.

It localises to the cytoplasm. It is found in the cytosol. Its subcellular location is the inflammasome. Its activity is regulated as follows. Activated by cleavage by B.anthracis lethal toxin (LT) endopeptidase. Cleavage by LT promotes ubiquitination and degradation of the N-terminal part, releasing the cleaved C-terminal part of the protein (NACHT, LRR and PYD domains-containing protein 1b, C-terminus), which polymerizes and forms the Nlrp1b inflammasome. Nlrp1b inflammasome is inhibited by DPP8 and DPP9, which sequester the C-terminal fragment of Nlrp1b (NACHT, LRR and PYD domains-containing protein 1b, C-terminus) in a ternary complex, thereby preventing Nlrp1b oligomerization and activation. Nlrp1b inflammasome is activated by Val-boroPro (Talabostat, PT-100), an inhibitor of dipeptidyl peptidases DPP8 and DPP9. Val-boroPro relieves inhibition of DPP8 and/or DPP9 by promoting disruption of the ternary complex, releasing its C-terminal part from autoinhibition. Activated by metabolic inhibitors, such as 2-deoxy-D-glucose and sodium azide. Not activated by muramyl dipeptide, nor by full-length bacterial peptidoglycan. Functionally, acts as the sensor component of the Nlrp1b inflammasome, which mediates inflammasome activation in response to various pathogen-associated signals, leading to subsequent pyroptosis. Inflammasomes are supramolecular complexes that assemble in the cytosol in response to pathogens and other damage-associated signals and play critical roles in innate immunity and inflammation. Acts as a recognition receptor (PRR): recognizes specific pathogens and other damage-associated signals, such as B.anthracis lethal toxin (LT) or Val-boroPro inhibitor, and mediates the formation of the inflammasome polymeric complex. In response to pathogen-associated signals, the N-terminal part of Nlrp1b is degraded by the proteasome, releasing the cleaved C-terminal part of the protein (NACHT, LRR and PYD domains-containing protein 1b, C-terminus), which polymerizes to initiate the formation of the inflammasome complex: the inflammasome directly recruits pro-caspase-1 (proCASP1) independently of PYCARD/ASC and promotes caspase-1 (CASP1) activation, which subsequently cleaves and activates inflammatory cytokines IL1B and IL18 and gasdermin-D (GSDMD), leading to pyroptosis. In the absence of GSDMD expression, the Nlrp1b inflammasome is able to recruit and activate CASP8, leading to activation of gasdermin-E (GSDME). Activation of Nlrp1b inflammasome is also required for HMGB1 secretion; the active cytokines and HMGB1 stimulate inflammatory responses. Primary mediator of macrophage susceptibility to B.anthracis LT: in response to B.anthracis infection, macrophages and dendritic cells release IL1B and undergo pyroptosis. This early inflammatory response to the toxin increases resistance to infection by B.anthracis spores. Its function is as follows. Constitutes the precursor of the Nlrp1b inflammasome, which mediates autoproteolytic processing within the FIIND domain to generate the N-terminal and C-terminal parts, which are associated non-covalently in absence of pathogens and other damage-associated signals. Regulatory part that prevents formation of the Nlrp1b inflammasome: in absence of pathogens and other damage-associated signals, interacts with the C-terminal part of Nlrp1b (NACHT, LRR and PYD domains-containing protein 1b, C-terminus), preventing activation of the Nlrp1b inflammasome. In response to pathogen-associated signals, this part is ubiquitinated by the N-end rule pathway and degraded by the proteasome, releasing the cleaved C-terminal part of the protein, which polymerizes and forms the Nlrp1b inflammasome. In terms of biological role, constitutes the active part of the Nlrp1b inflammasome. In absence of pathogens and other damage-associated signals, interacts with the N-terminal part of Nlrp1b (NACHT, LRR and PYD domains-containing protein 1b, N-terminus), preventing activation of the Nlrp1b inflammasome. In response to pathogen-associated signals, the N-terminal part of Nlrp1b is degraded by the proteasome, releasing this form, which polymerizes to form the Nlrp1b inflammasome complex: the Nlrp1b inflammasome complex then directly recruits pro-caspase-1 (proCASP1) and promotes caspase-1 (CASP1) activation, leading to gasdermin-D (GSDMD) cleavage and subsequent pyroptosis. In Mus musculus (Mouse), this protein is NACHT, LRR and PYD domains-containing protein 1b allele 5 (Nlrp1b).